We begin with the raw amino-acid sequence, 270 residues long: Cell division protein DivIB (270 aa).

The Cytoplasmic portion of the chain corresponds to 1-38; sequence MTRRNNPELNDEREPIDKIKASIDLKKKTIRRNKRKRR. A helical transmembrane segment spans residues 39-59; that stretch reads LIKMLQFLIVIGVLIGIYYFD. The Extracellular segment spans residues 60-270; that stretch reads KSDASRVHNV…QSAVVKACGS (211 aa). In terms of domain architecture, POTRA spans 64–135; that stretch reads SRVHNVRVNG…INLNVTEKKA (72 aa).

It belongs to the FtsQ/DivIB family. DivIB subfamily.

The protein resides in the cell membrane. Its function is as follows. Cell division protein that may be involved in stabilizing or promoting the assembly of the division complex. The protein is Cell division protein DivIB of Erysipelothrix rhusiopathiae (strain Fujisawa).